The following is a 282-amino-acid chain: 4-diphosphocytidyl-2-C-methyl-D-erythritol kinase (282 aa).

Residue Lys9 is part of the active site. 98-108 (PMGGGLGGGSS) contacts ATP. Asp140 is a catalytic residue.

The protein belongs to the GHMP kinase family. IspE subfamily. Homodimer.

The catalysed reaction is 4-CDP-2-C-methyl-D-erythritol + ATP = 4-CDP-2-C-methyl-D-erythritol 2-phosphate + ADP + H(+). It participates in isoprenoid biosynthesis; isopentenyl diphosphate biosynthesis via DXP pathway; isopentenyl diphosphate from 1-deoxy-D-xylulose 5-phosphate: step 3/6. Its function is as follows. Catalyzes the phosphorylation of the position 2 hydroxy group of 4-diphosphocytidyl-2C-methyl-D-erythritol. This is 4-diphosphocytidyl-2-C-methyl-D-erythritol kinase from Salmonella paratyphi A (strain ATCC 9150 / SARB42).